The following is a 1531-amino-acid chain: DNA topoisomerase 2-alpha (1531 aa).

An N-acetylmethionine modification is found at Met-1. A Phosphoserine modification is found at Ser-4. Lys-17 participates in a covalent cross-link: Glycyl lysine isopeptide (Lys-Gly) (interchain with G-Cter in SUMO2). Residues Asn-91, Asn-120, and 148–150 (SSN) each bind ATP. Glycyl lysine isopeptide (Lys-Gly) (interchain with G-Cter in SUMO2) cross-links involve residues Lys-156 and Lys-157. 161–168 (GRNGYGAK) contributes to the ATP binding site. Residue Lys-261 forms a Glycyl lysine isopeptide (Lys-Gly) (interchain with G-Cter in SUMO2) linkage. At Thr-282 the chain carries Phosphothreonine. Residues 342–344 (KKK) form an interaction with DNA region. Lys-352 is covalently cross-linked (Glycyl lysine isopeptide (Lys-Gly) (interchain with G-Cter in SUMO2)). 376–378 (QTK) is a binding site for ATP. Glycyl lysine isopeptide (Lys-Gly) (interchain with G-Cter in SUMO2) cross-links involve residues Lys-386, Lys-397, Lys-416, Lys-418, Lys-425, and Lys-440. Residues 455-572 (CTLILTEGDS…SLLRHRFLEE (118 aa)) form the Toprim domain. Glu-461 contributes to the Mg(2+) binding site. Residues Lys-466, Lys-480, and Lys-529 each participate in a glycyl lysine isopeptide (Lys-Gly) (interchain with G-Cter in SUMO2) cross-link. Positions 541 and 543 each coordinate Mg(2+). Glycyl lysine isopeptide (Lys-Gly) (interchain with G-Cter in SUMO2) cross-links involve residues Lys-584, Lys-599, Lys-614, Lys-622, Lys-625, Lys-632, Lys-639, Lys-655, Lys-662, and Lys-676. Residues 715–1171 (IPSMVDGLKP…SPSDLWKEDL (457 aa)) form the Topo IIA-type catalytic domain. Tyr-805 acts as the O-(5'-phospho-DNA)-tyrosine intermediate in catalysis. Residues 990–999 (KLQTSLTCNS) are interaction with DNA. A Nuclear export signal motif is present at residues 1018-1028 (ILRDFFELRLK). Lys-1075 is covalently cross-linked (Glycyl lysine isopeptide (Lys-Gly) (interchain with G-Cter in SUMO2)). 2 disordered regions span residues 1090–1123 (WKEA…DSGP) and 1184–1531 (KEKQ…DDLF). The segment covering 1099-1108 (DEEENEESDN) has biased composition (acidic residues). The residue at position 1106 (Ser-1106) is a Phosphoserine; by CK1. Residues Lys-1114, Lys-1196, and Lys-1204 each participate in a glycyl lysine isopeptide (Lys-Gly) (interchain with G-Cter in SUMO2) cross-link. A Phosphothreonine modification is found at Thr-1205. Ser-1213 is modified (phosphoserine). Lys-1228 participates in a covalent cross-link: Glycyl lysine isopeptide (Lys-Gly) (interchain with G-Cter in SUMO2). Lys-1240 is covalently cross-linked (Glycyl lysine isopeptide (Lys-Gly) (interchain with G-Cter in SUMO1); alternate). A Glycyl lysine isopeptide (Lys-Gly) (interchain with G-Cter in SUMO2); alternate cross-link involves residue Lys-1240. The residue at position 1244 (Thr-1244) is a Phosphothreonine. A Phosphoserine modification is found at Ser-1247. The segment covering 1256 to 1272 (EGLKQRLEKKQKREPGT) has biased composition (basic and acidic residues). Residues Lys-1259, Lys-1276, Lys-1283, and Lys-1286 each participate in a glycyl lysine isopeptide (Lys-Gly) (interchain with G-Cter in SUMO2) cross-link. Ser-1295, Ser-1297, Ser-1299, and Ser-1302 each carry phosphoserine. Thr-1327 carries the phosphothreonine modification. Acidic residues predominate over residues 1330-1349 (LDSDEDFSDFDEKTDDEDFV). Residues Ser-1332 and Ser-1337 each carry the phosphoserine modification. Position 1343 is a phosphothreonine; by PLK3 (Thr-1343). Phosphoserine occurs at positions 1351 and 1354. Residues Lys-1363, Lys-1367, and Lys-1373 each participate in a glycyl lysine isopeptide (Lys-Gly) (interchain with G-Cter in SUMO2) cross-link. Ser-1374 and Ser-1377 each carry phosphoserine. A Glycyl lysine isopeptide (Lys-Gly) (interchain with G-Cter in SUMO2) cross-link involves residue Lys-1385. A phosphoserine mark is found at Ser-1387, Ser-1391, Ser-1392, and Ser-1393. Over residues 1406-1431 (TNPVPKKNVTVKKTAAKSQSSTSTTG) the composition is skewed to low complexity. A Glycyl lysine isopeptide (Lys-Gly) (interchain with G-Cter in SUMO2); alternate cross-link involves residue Lys-1422. Residue Lys-1422 is modified to N6-acetyllysine; alternate. Residues 1433-1439 (KKRAAPK) form an interaction with PLSCR1 region. A Glycyl lysine isopeptide (Lys-Gly) (interchain with G-Cter in SUMO2); alternate cross-link involves residue Lys-1442. An N6-acetyllysine; alternate modification is found at Lys-1442. At Ser-1449 the chain carries Phosphoserine. Residues Lys-1454 and Lys-1459 each participate in a glycyl lysine isopeptide (Lys-Gly) (interchain with G-Cter in SUMO2) cross-link. Ser-1469 bears the Phosphoserine; by CK2 mark. Thr-1470 bears the Phosphothreonine mark. Residues Ser-1471, Ser-1474, and Ser-1476 each carry the phosphoserine modification. Glycyl lysine isopeptide (Lys-Gly) (interchain with G-Cter in SUMO2) cross-links involve residues Lys-1484 and Lys-1492. Residues 1491 to 1502 (SKGESDDFHMDF) show a composition bias toward basic and acidic residues. 3 positions are modified to phosphoserine: Ser-1495, Ser-1504, and Ser-1525.

The protein belongs to the type II topoisomerase family. Homodimer. Interacts with COPS5. Interacts with RECQL5; this stimulates DNA decatenation. Interacts with SETMAR; stimulates the topoisomerase activity. Interacts with DHX9; this interaction occurs in a E2 enzyme UBE2I- and RNA-dependent manner, negatively regulates DHX9-mediated double-stranded DNA and RNA duplex helicase activity and stimulates TOP2A-mediated supercoiled DNA relaxation activity. Interacts with HNRNPU (via C-terminus); this interaction protects the topoisomerase TOP2A from degradation and positively regulates the relaxation of supercoiled DNA in a RNA-dependent manner. Interacts with MCM3AP isoform GANP. Interacts with ERCC6. Interacts with PLSCR1. Interacts with GCNA; this interaction allows the resolution of topoisomerase II (TOP2A) DNA-protein cross-links. Interacts with POL1RA/RPA1 (via dock II) and UBTF in the context of Pol I complex; may assist Pol I transcription initiation by releasing supercoils occurring during DNA unwinding. Interacts with TPRN; TPRN interacts with a number of DNA damage response proteins, is recruited to sites of DNA damage and may play a role in DNA damage repair. Requires Mg(2+) as cofactor. Mn(2+) is required as a cofactor. The cofactor is Ca(2+). Post-translationally, phosphorylation has no effect on catalytic activity. However, phosphorylation at Ser-1106 by CSNK1D/CK1 promotes DNA cleavable complex formation. (Microbial infection) Deubiquitinated by Epstein-Barr virus BPLF1; leading to stabilized SUMOylated TOP2A trapped in cleavage complexes, which halts the DNA damage response to TOP2A-induced double-strand DNA breaks. In terms of processing, SUMOylated. Expressed in the tonsil, spleen, lymph node, thymus, skin, pancreas, testis, colon, kidney, liver, brain and lung. Also found in high-grade lymphomas, squamous cell lung tumors and seminomas.

Its subcellular location is the cytoplasm. The protein localises to the nucleus. The protein resides in the nucleoplasm. It localises to the nucleolus. It carries out the reaction ATP-dependent breakage, passage and rejoining of double-stranded DNA.. With respect to regulation, specifically inhibited by the intercalating agent amsacrine. Functionally, key decatenating enzyme that alters DNA topology by binding to two double-stranded DNA molecules, generating a double-stranded break in one of the strands, passing the intact strand through the broken strand, and religating the broken strand. May play a role in regulating the period length of BMAL1 transcriptional oscillation. This chain is DNA topoisomerase 2-alpha (TOP2A), found in Homo sapiens (Human).